A 136-amino-acid polypeptide reads, in one-letter code: Large ribosomal subunit protein uL16 (136 aa).

Belongs to the universal ribosomal protein uL16 family. In terms of assembly, part of the 50S ribosomal subunit.

In terms of biological role, binds 23S rRNA and is also seen to make contacts with the A and possibly P site tRNAs. The sequence is that of Large ribosomal subunit protein uL16 from Pseudoalteromonas atlantica (strain T6c / ATCC BAA-1087).